A 222-amino-acid polypeptide reads, in one-letter code: uncharacterized protein (222 aa).

A run of 7 helical transmembrane segments spans residues 26-46 (YGLLALTLAFSGLVAYVSQQM), 48-68 (LPYPNVFVVLIGFYGLFFLTV), 75-95 (WGLVSTFALTGFMGYTLGPIL), 107-127 (VITSAFAMTALVFFGLSAYVL), 139-159 (FITAGFFVLLGAVLVSLFFQI), 166-186 (ISAGFVLFSSAMILYQTSAII), and 198-218 (ISLYVSIYNLFISLLQIFGIA).

The protein belongs to the BI1 family.

Its subcellular location is the cell membrane. This is an uncharacterized protein from Pseudomonas aeruginosa (strain ATCC 15692 / DSM 22644 / CIP 104116 / JCM 14847 / LMG 12228 / 1C / PRS 101 / PAO1).